The chain runs to 182 residues: Ribosome-recycling factor (182 aa).

The protein belongs to the RRF family.

The protein resides in the cytoplasm. In terms of biological role, responsible for the release of ribosomes from messenger RNA at the termination of protein biosynthesis. May increase the efficiency of translation by recycling ribosomes from one round of translation to another. The sequence is that of Ribosome-recycling factor from Hydrogenobaculum sp. (strain Y04AAS1).